We begin with the raw amino-acid sequence, 37 residues long: Cytochrome b6-f complex subunit 5 (37 aa).

The chain crosses the membrane as a helical span at residues 5-25 (FLFGIVLGLIPITLAGLFVTA).

It belongs to the PetG family. The 4 large subunits of the cytochrome b6-f complex are cytochrome b6, subunit IV (17 kDa polypeptide, PetD), cytochrome f and the Rieske protein, while the 4 small subunits are PetG, PetL, PetM and PetN. The complex functions as a dimer.

Its subcellular location is the plastid thylakoid membrane. Functionally, component of the cytochrome b6-f complex, which mediates electron transfer between photosystem II (PSII) and photosystem I (PSI), cyclic electron flow around PSI, and state transitions. PetG is required for either the stability or assembly of the cytochrome b6-f complex. The chain is Cytochrome b6-f complex subunit 5 from Cuscuta reflexa (Southern Asian dodder).